Consider the following 314-residue polypeptide: tRNA N6-adenosine threonylcarbamoyltransferase (314 aa).

3 residues coordinate Fe cation: His106, His110, and Tyr127. Substrate-binding positions include 127–131 (YVSGA), Asp159, Gly172, Glu176, and Asn255. Asp283 contacts Fe cation.

The protein belongs to the KAE1 / TsaD family. Fe(2+) serves as cofactor.

It is found in the cytoplasm. The enzyme catalyses L-threonylcarbamoyladenylate + adenosine(37) in tRNA = N(6)-L-threonylcarbamoyladenosine(37) in tRNA + AMP + H(+). In terms of biological role, required for the formation of a threonylcarbamoyl group on adenosine at position 37 (t(6)A37) in tRNAs that read codons beginning with adenine. Is probably involved in the transfer of the threonylcarbamoyl moiety of threonylcarbamoyl-AMP (TC-AMP) to the N6 group of A37. This is tRNA N6-adenosine threonylcarbamoyltransferase from Nanoarchaeum equitans (strain Kin4-M).